Reading from the N-terminus, the 436-residue chain is MANVVVIGAQWGDEGKGKITDLLSRSADVVVRYQGGVNAGHTIVVDDKVLKLHLIPSGILYKNTSCLIGSGTVIDPKILLKEIDMLIDNGIDISGLKISSTSHVTMPYHRILDEAMEADRGSNKIGTTGRGIGPTYADKSQRNGIRIRDLLNKERLSDVIEIPLREKNGLLEKIYGIKPLKLEDIVEEYLDYGERLSKHVVDCTRTIHAASKNKKNILFEGAQGTLLDLDHGTYPFVTSSNPISGGACIGAGVGPTLIDRVIGVAKAYTTRVGEGPFPTELQGSINDQLCDRGSEFGTTTGRRRRCGWFDGVIGKYAVSVNGLDCLAVTKLDVLDELDEIQVCIAYDLNGEEIDYFPTNSDDLKKCKPIFKKLKGWQCSTADCRKLSDLPENAMNYLRFLAELMEVPIAIVSLGANRDQTIVIEDPIHGPKRALLR.

Residues 12–18 and 40–42 contribute to the GTP site; these read GDEGKGK and GHT. Catalysis depends on Asp-13, which acts as the Proton acceptor. Positions 13 and 40 each coordinate Mg(2+). IMP is bound by residues 13–16, 38–41, Thr-128, Arg-142, Gln-223, Thr-238, and Arg-302; these read DEGK and NAGH. The active-site Proton donor is the His-41. 298–304 provides a ligand contact to substrate; it reads TTTGRRR. GTP is bound by residues Arg-304, 330-332, and 412-414; these read KLD and SLG.

Belongs to the adenylosuccinate synthetase family. Homodimer. Mg(2+) is required as a cofactor.

The protein resides in the cytoplasm. It catalyses the reaction IMP + L-aspartate + GTP = N(6)-(1,2-dicarboxyethyl)-AMP + GDP + phosphate + 2 H(+). It participates in purine metabolism; AMP biosynthesis via de novo pathway; AMP from IMP: step 1/2. Its function is as follows. Plays an important role in the de novo pathway of purine nucleotide biosynthesis. Catalyzes the first committed step in the biosynthesis of AMP from IMP. The chain is Adenylosuccinate synthetase from Prochlorococcus marinus (strain AS9601).